The primary structure comprises 332 residues: Ketol-acid reductoisomerase (NADP(+)) (332 aa).

One can recognise a KARI N-terminal Rossmann domain in the interval 1 to 182; the sequence is MATIYRDKDA…GGTRAGVLET (182 aa). Residues 25–28, lysine 49, serine 51, and 83–86 contribute to the NADP(+) site; these read YGNQ and DELQ. The active site involves histidine 108. Residue glycine 134 coordinates NADP(+). One can recognise a KARI C-terminal knotted domain in the interval 183-328; sequence TFAEETETDL…AELRAMMPWL (146 aa). Positions 191, 195, 227, and 231 each coordinate Mg(2+). Serine 252 serves as a coordination point for substrate.

Belongs to the ketol-acid reductoisomerase family. Requires Mg(2+) as cofactor.

The catalysed reaction is (2R)-2,3-dihydroxy-3-methylbutanoate + NADP(+) = (2S)-2-acetolactate + NADPH + H(+). It catalyses the reaction (2R,3R)-2,3-dihydroxy-3-methylpentanoate + NADP(+) = (S)-2-ethyl-2-hydroxy-3-oxobutanoate + NADPH + H(+). Its pathway is amino-acid biosynthesis; L-isoleucine biosynthesis; L-isoleucine from 2-oxobutanoate: step 2/4. The protein operates within amino-acid biosynthesis; L-valine biosynthesis; L-valine from pyruvate: step 2/4. Functionally, involved in the biosynthesis of branched-chain amino acids (BCAA). Catalyzes an alkyl-migration followed by a ketol-acid reduction of (S)-2-acetolactate (S2AL) to yield (R)-2,3-dihydroxy-isovalerate. In the isomerase reaction, S2AL is rearranged via a Mg-dependent methyl migration to produce 3-hydroxy-3-methyl-2-ketobutyrate (HMKB). In the reductase reaction, this 2-ketoacid undergoes a metal-dependent reduction by NADPH to yield (R)-2,3-dihydroxy-isovalerate. The protein is Ketol-acid reductoisomerase (NADP(+)) of Methanothrix thermoacetophila (strain DSM 6194 / JCM 14653 / NBRC 101360 / PT) (Methanosaeta thermophila).